Consider the following 488-residue polypeptide: Proline--tRNA ligase (488 aa).

This sequence belongs to the class-II aminoacyl-tRNA synthetase family. ProS type 3 subfamily. In terms of assembly, homodimer.

It is found in the cytoplasm. The catalysed reaction is tRNA(Pro) + L-proline + ATP = L-prolyl-tRNA(Pro) + AMP + diphosphate. Catalyzes the attachment of proline to tRNA(Pro) in a two-step reaction: proline is first activated by ATP to form Pro-AMP and then transferred to the acceptor end of tRNA(Pro). This is Proline--tRNA ligase from Borreliella afzelii (strain PKo) (Borrelia afzelii).